The primary structure comprises 348 residues: Phosphoribosylformylglycinamidine cyclo-ligase (348 aa).

It belongs to the AIR synthase family.

Its subcellular location is the cytoplasm. The enzyme catalyses 2-formamido-N(1)-(5-O-phospho-beta-D-ribosyl)acetamidine + ATP = 5-amino-1-(5-phospho-beta-D-ribosyl)imidazole + ADP + phosphate + H(+). It participates in purine metabolism; IMP biosynthesis via de novo pathway; 5-amino-1-(5-phospho-D-ribosyl)imidazole from N(2)-formyl-N(1)-(5-phospho-D-ribosyl)glycinamide: step 2/2. The polypeptide is Phosphoribosylformylglycinamidine cyclo-ligase (Aromatoleum aromaticum (strain DSM 19018 / LMG 30748 / EbN1) (Azoarcus sp. (strain EbN1))).